The chain runs to 436 residues: Protein GOLM2 (436 aa).

At M1 the chain carries N-acetylmethionine. Topologically, residues 1–14 are cytoplasmic; that stretch reads MVGFGANRRAGRLP. Residues 15–35 form a helical; Signal-anchor for type II membrane protein membrane-spanning segment; it reads SLVLVVLLVVIVVLAFNYWSI. Residues 35 to 198 adopt a coiled-coil conformation; sequence ISSRHVLLQE…EEQKQETQKI (164 aa). Over 36–436 the chain is Lumenal; sequence SSRHVLLQEE…YGKQHFNDVL (401 aa). Residues 225 to 247 are compositionally biased toward basic and acidic residues; it reads ADKNEEPSSNHIPHGKEQIKRGG. Residues 225–436 form a disordered region; it reads ADKNEEPSSN…YGKQHFNDVL (212 aa). Residues S233 and S275 each carry the phosphoserine modification. Residues 305 to 321 are compositionally biased toward polar residues; the sequence is NHNGNPGTSKQNPSSPL. Residues S328 and S332 each carry the phosphoserine modification. Basic and acidic residues predominate over residues 344–362; the sequence is ATKDRVSDFHKLKQSRFFD. S366 is subject to Phosphoserine. Residues 399–418 show a composition bias toward acidic residues; that stretch reads YNEEEDGDGGEEDVQDDEER. The segment covering 426-436 has biased composition (basic and acidic residues); the sequence is DYGKQHFNDVL.

It belongs to the GOLM family.

It is found in the membrane. This Homo sapiens (Human) protein is Protein GOLM2.